Consider the following 615-residue polypeptide: Probable inactive purple acid phosphatase 24 (615 aa).

Residues methionine 1 to glycine 26 form the signal peptide. 3 N-linked (GlcNAc...) asparagine glycosylation sites follow: asparagine 129, asparagine 267, and asparagine 275. Residue aspartate 297 participates in Fe cation binding. Asparagine 318 carries N-linked (GlcNAc...) asparagine glycosylation. Fe cation contacts are provided by aspartate 338 and tyrosine 341. Aspartate 338 serves as a coordination point for Zn(2+). Residues asparagine 371, histidine 460, and histidine 502 each contribute to the Zn(2+) site. Asparagine 371 contributes to the substrate binding site. Histidine 502–histidine 504 is a binding site for substrate. A Fe cation-binding site is contributed by histidine 504. Residue asparagine 592 is glycosylated (N-linked (GlcNAc...) asparagine).

The protein belongs to the metallophosphoesterase superfamily. Purple acid phosphatase family. Homodimer. Fe cation is required as a cofactor. It depends on Zn(2+) as a cofactor. As to expression, specifically expressed in flowers.

The protein resides in the secreted. This chain is Probable inactive purple acid phosphatase 24 (PAP24), found in Arabidopsis thaliana (Mouse-ear cress).